The following is a 109-amino-acid chain: uncharacterized protein (109 aa).

The helical transmembrane segment at 12 to 32 (PNILIKGVYIFVLYGMCICIV) threads the bilayer.

It localises to the membrane. This is an uncharacterized protein from Saccharomyces cerevisiae (strain ATCC 204508 / S288c) (Baker's yeast).